Here is a 382-residue protein sequence, read N- to C-terminus: Homoserine O-acetyltransferase (382 aa).

Residues 1–20 form a disordered region; it reads MSTDQSPCPSATGAELLPPP. The 305-residue stretch at 59–363 folds into the AB hydrolase-1 domain; sequence NVVLVEHALT…RDGHDGFLTE (305 aa). Ser164 (nucleophile) is an active-site residue. Residue Arg234 participates in substrate binding. Residues Asp327 and His357 contribute to the active site. Asp358 provides a ligand contact to substrate.

Belongs to the AB hydrolase superfamily. MetX family. In terms of assembly, homodimer.

Its subcellular location is the cytoplasm. The catalysed reaction is L-homoserine + acetyl-CoA = O-acetyl-L-homoserine + CoA. It participates in amino-acid biosynthesis; L-methionine biosynthesis via de novo pathway; O-acetyl-L-homoserine from L-homoserine: step 1/1. Its function is as follows. Transfers an acetyl group from acetyl-CoA to L-homoserine, forming acetyl-L-homoserine. This chain is Homoserine O-acetyltransferase, found in Nocardia farcinica (strain IFM 10152).